Reading from the N-terminus, the 658-residue chain is Interferon-induced GTP-binding protein Mx1 (658 aa).

At methionine 1 the chain carries N-acetylmethionine. The disordered stretch occupies residues 1–20 (MVNSKGKITDSDPGSSHLLL). The Dynamin-type G domain occupies 65-338 (DLALPAIAVI…LITHICKTLP (274 aa)). Positions 75–82 (GDQSSGKS) are G1 motif. 75–82 (GDQSSGKS) contributes to the GTP binding site. Positions 100 to 102 (VTR) are G2 motif. The interval 176–179 (DLPG) is G3 motif. GTP-binding positions include 176 to 180 (DLPGI) and 245 to 248 (TKPD). The segment at 245–248 (TKPD) is G4 motif. The G5 motif stretch occupies residues 277–280 (KCRG). The segment at 339–364 (LLEKQIKENYEKITEELQKYGSDVPE) is bundle signaling element (BSE). Positions 364 to 531 (EEEHEKMFFL…HFQMEQIVYC (168 aa)) are middle domain. The interval 365 to 628 (EEHEKMFFLI…KDTHNWLLKE (264 aa)) is stalk. Residues 551-554 (KDKK) form a critical for lipid-binding region. Residues 570–658 (LSDIFEHLLA…ARRRLAKFPG (89 aa)) enclose the GED domain.

The protein belongs to the TRAFAC class dynamin-like GTPase superfamily. Dynamin/Fzo/YdjA family. As to quaternary structure, homooligomer. Oligomerizes into multimeric filamentous or ring-like structures by virtue of its stalk domain. Oligomerization is critical for GTPase activity, protein stability, and recognition of viral target structures. Interacts with TRPC1, TRPC3, TRPC4, TRPC5, TRPC6 and TRPC7. Interacts with HSPA5. Interacts with TUBB/TUBB5. Interacts with DDX39A and DDX39B. In terms of processing, ISGylated.

The protein resides in the cytoplasm. It localises to the endoplasmic reticulum membrane. It is found in the perinuclear region. In terms of biological role, interferon-induced dynamin-like GTPase with antiviral activity. The sequence is that of Interferon-induced GTP-binding protein Mx1 (MX1) from Otaria byronia (South American sea lion).